The primary structure comprises 257 residues: Deoxyribose-phosphate aldolase (257 aa).

Asp-102 functions as the Proton donor/acceptor in the catalytic mechanism. Lys-166 functions as the Schiff-base intermediate with acetaldehyde in the catalytic mechanism. Lys-198 serves as the catalytic Proton donor/acceptor.

Belongs to the DeoC/FbaB aldolase family. DeoC type 2 subfamily.

It is found in the cytoplasm. The enzyme catalyses 2-deoxy-D-ribose 5-phosphate = D-glyceraldehyde 3-phosphate + acetaldehyde. The protein operates within carbohydrate degradation; 2-deoxy-D-ribose 1-phosphate degradation; D-glyceraldehyde 3-phosphate and acetaldehyde from 2-deoxy-alpha-D-ribose 1-phosphate: step 2/2. In terms of biological role, catalyzes a reversible aldol reaction between acetaldehyde and D-glyceraldehyde 3-phosphate to generate 2-deoxy-D-ribose 5-phosphate. In Aeromonas hydrophila subsp. hydrophila (strain ATCC 7966 / DSM 30187 / BCRC 13018 / CCUG 14551 / JCM 1027 / KCTC 2358 / NCIMB 9240 / NCTC 8049), this protein is Deoxyribose-phosphate aldolase.